A 166-amino-acid polypeptide reads, in one-letter code: NADH-ubiquinone oxidoreductase chain 6 (166 aa).

6 helical membrane passes run 4 to 24 (FFSL…VVSA), 27 to 47 (QGVV…VFLG), 50 to 70 (FAAL…FGYC), 82 to 102 (VGGT…LLCL), 109 to 129 (LLVY…VGVF), and 135 to 155 (WGLI…LVIL).

It belongs to the complex I subunit 6 family.

Its subcellular location is the mitochondrion membrane. The catalysed reaction is a ubiquinone + NADH + 5 H(+)(in) = a ubiquinol + NAD(+) + 4 H(+)(out). In terms of biological role, core subunit of the mitochondrial membrane respiratory chain NADH dehydrogenase (Complex I) that is believed to belong to the minimal assembly required for catalysis. Complex I functions in the transfer of electrons from NADH to the respiratory chain. The immediate electron acceptor for the enzyme is believed to be ubiquinone. The chain is NADH-ubiquinone oxidoreductase chain 6 (MT-ND6) from Lycodon semicarinatus (Ryukyu odd-tooth snake).